The sequence spans 186 residues: UPF0301 protein Swoo_1337 (186 aa).

It belongs to the UPF0301 (AlgH) family.

The protein is UPF0301 protein Swoo_1337 of Shewanella woodyi (strain ATCC 51908 / MS32).